A 103-amino-acid polypeptide reads, in one-letter code: N(4)-acetylcytidine amidohydrolase (103 aa).

One can recognise an ASCH domain in the interval 6–101 (ITFFQRFQDD…QTQFYVIEFK (96 aa)). Lys-21 serves as the catalytic Proton acceptor. Residue Thr-24 is the Nucleophile of the active site. Glu-74 serves as the catalytic Proton donor.

Belongs to the N(4)-acetylcytidine amidohydrolase family.

The enzyme catalyses N(4)-acetylcytidine + H2O = cytidine + acetate + H(+). It carries out the reaction N(4)-acetyl-2'-deoxycytidine + H2O = 2'-deoxycytidine + acetate + H(+). It catalyses the reaction N(4)-acetylcytosine + H2O = cytosine + acetate + H(+). In terms of biological role, catalyzes the hydrolysis of N(4)-acetylcytidine (ac4C). The protein is N(4)-acetylcytidine amidohydrolase (yqfB) of Escherichia fergusonii (strain ATCC 35469 / DSM 13698 / CCUG 18766 / IAM 14443 / JCM 21226 / LMG 7866 / NBRC 102419 / NCTC 12128 / CDC 0568-73).